The sequence spans 191 residues: Orotate phosphoribosyltransferase (191 aa).

A 5-phospho-alpha-D-ribose 1-diphosphate-binding site is contributed by 116 to 124; the sequence is EDVVTTGGS. Orotate is bound by residues T120 and R148.

The protein belongs to the purine/pyrimidine phosphoribosyltransferase family. PyrE subfamily. As to quaternary structure, homodimer. Mg(2+) is required as a cofactor.

It catalyses the reaction orotidine 5'-phosphate + diphosphate = orotate + 5-phospho-alpha-D-ribose 1-diphosphate. The protein operates within pyrimidine metabolism; UMP biosynthesis via de novo pathway; UMP from orotate: step 1/2. Functionally, catalyzes the transfer of a ribosyl phosphate group from 5-phosphoribose 1-diphosphate to orotate, leading to the formation of orotidine monophosphate (OMP). The polypeptide is Orotate phosphoribosyltransferase (Carboxydothermus hydrogenoformans (strain ATCC BAA-161 / DSM 6008 / Z-2901)).